The chain runs to 718 residues: DNA topoisomerase 1 (718 aa).

The Toprim domain occupies 9–151 (HEVIICEKPK…KFSTLTREEI (143 aa)). 2 residues coordinate Mg(2+): Glu15 and Asp113. The 410-residue stretch at 162-571 (DYGQVDSGAA…EAITEVRSIL (410 aa)) folds into the Topo IA-type catalytic domain. The interval 202–207 (SAGRVQ) is interaction with DNA. The active-site O-(5'-phospho-DNA)-tyrosine intermediate is the Tyr320. Residues 361–371 (HEGKKEDDAHP) are compositionally biased toward basic and acidic residues. The disordered stretch occupies residues 361-380 (HEGKKEDDAHPAIHPTGLLP). 2 consecutive C4-type zinc fingers follow at residues 598–626 (CPAC…YPDC) and 680–706 (CPEC…FPKC).

It belongs to the type IA topoisomerase family. As to quaternary structure, monomer. Requires Mg(2+) as cofactor.

It carries out the reaction ATP-independent breakage of single-stranded DNA, followed by passage and rejoining.. Functionally, releases the supercoiling and torsional tension of DNA, which is introduced during the DNA replication and transcription, by transiently cleaving and rejoining one strand of the DNA duplex. Introduces a single-strand break via transesterification at a target site in duplex DNA. The scissile phosphodiester is attacked by the catalytic tyrosine of the enzyme, resulting in the formation of a DNA-(5'-phosphotyrosyl)-enzyme intermediate and the expulsion of a 3'-OH DNA strand. The free DNA strand then undergoes passage around the unbroken strand, thus removing DNA supercoils. Finally, in the religation step, the DNA 3'-OH attacks the covalent intermediate to expel the active-site tyrosine and restore the DNA phosphodiester backbone. The protein is DNA topoisomerase 1 of Methanothermobacter thermautotrophicus (strain ATCC 29096 / DSM 1053 / JCM 10044 / NBRC 100330 / Delta H) (Methanobacterium thermoautotrophicum).